We begin with the raw amino-acid sequence, 530 residues long: GMP synthase [glutamine-hydrolyzing] (530 aa).

A Glutamine amidotransferase type-1 domain is found at 4 to 205; that stretch reads RILILDYGSQ…VKDICGCEGD (202 aa). Cys-84 acts as the Nucleophile in catalysis. Active-site residues include His-179 and Glu-181. Residues 206–398 enclose the GMPS ATP-PPase domain; sequence WNMPDYISEA…LGLPPQMVYR (193 aa). 233-239 is a binding site for ATP; it reads SGGVDSL.

Homodimer.

It carries out the reaction XMP + L-glutamine + ATP + H2O = GMP + L-glutamate + AMP + diphosphate + 2 H(+). Its pathway is purine metabolism; GMP biosynthesis; GMP from XMP (L-Gln route): step 1/1. Its function is as follows. Catalyzes the synthesis of GMP from XMP. This Bordetella parapertussis (strain 12822 / ATCC BAA-587 / NCTC 13253) protein is GMP synthase [glutamine-hydrolyzing].